Consider the following 101-residue polypeptide: Urease subunit beta (101 aa).

Belongs to the urease beta subunit family. Heterotrimer of UreA (gamma), UreB (beta) and UreC (alpha) subunits. Three heterotrimers associate to form the active enzyme.

Its subcellular location is the cytoplasm. The catalysed reaction is urea + 2 H2O + H(+) = hydrogencarbonate + 2 NH4(+). Its pathway is nitrogen metabolism; urea degradation; CO(2) and NH(3) from urea (urease route): step 1/1. The chain is Urease subunit beta from Paraburkholderia phytofirmans (strain DSM 17436 / LMG 22146 / PsJN) (Burkholderia phytofirmans).